The following is a 704-amino-acid chain: MRFLSFRRLLLYHVLCLTLTEVSAHTVELNEMFGQIQSPGYPDSYPSDSEVTWNITVPEGFRVQLYFMHFNLESSYLCEYDYVKVETEDQVLATFCGRETTDTEQTPGQEVVLSPGSFMSVTFRSDFSNEERFTGFDAHYMAVDVDECKEREDEELSCDHYCHNYIGGYYCSCRFGYILHTDNRTCRVECSGNLFTQRTGTITSPDYPNPYPKSSECSYTIDLEEGFMVTLQFEDIFDIEDHPEVPCPYDYIKIKAGSKVWGPFCGEKSPEPISTQSHSIQILFRSDNSGENRGWRLSYRAAGNECPKLQPPVYGKIEPSQAVYSFKDQVLISCDTGYKVLKDNEVMDTFQIECLKDGAWSNKIPTCKIVDCGVPAVLKHGLVTFSTRNNLTTYKSEIRYSCQQPYYKMLHNTTGVYTCSAHGTWTNEVLKRSLPTCLPVCGLPKFSRKHISRIFNGRPAQKGTTPWIAMLSQLNGQPFCGGSLLGSNWVLTAAHCLHHPLDPEEPILHNSHLLSPSDFKIIMGKHWRRRSDEDEQHLHVKHIMLHPLYNPSTFENDLGLVELSESPRLNDFVMPVCLPEHPSTEGTMVIVSGWGKQFLQRLPENLMEIEIPIVNYHTCQEAYTPLGKKVTQDMICAGEKEGGKDACAGDSGGPMVTKDAERDQWYLVGVVSWGEDCGKKDRYGVYSYIYPNKDWIQRVTGVRN.

A signal peptide spans 1–24; the sequence is MRFLSFRRLLLYHVLCLTLTEVSA. Residues 25 to 143 form the CUB 1 domain; that stretch reads HTVELNEMFG…TGFDAHYMAV (119 aa). A homodimerization region spans residues 25–189; sequence HTVELNEMFG…HTDNRTCRVE (165 aa). An interaction with MBL2 region spans residues 25 to 189; the sequence is HTVELNEMFG…HTDNRTCRVE (165 aa). The tract at residues 25 to 283 is interaction with FCN2; it reads HTVELNEMFG…STQSHSIQIL (259 aa). Positions 25-305 are interaction with MBL1; that stretch reads HTVELNEMFG…RLSYRAAGNE (281 aa). N54 carries N-linked (GlcNAc...) asparagine glycosylation. E73, D81, D126, S128, D144, V145, and E147 together coordinate Ca(2+). A disulfide bridge connects residues C78 and C96. The EGF-like; calcium-binding domain maps to 144-187; the sequence is DVDECKEREDEELSCDHYCHNYIGGYYCSCRFGYILHTDNRTCR. Cystine bridges form between C148–C162, C158–C171, C173–C186, and C190–C217. Residues N164, Y165, and G168 each coordinate Ca(2+). N164 carries the post-translational modification (3R)-3-hydroxyasparagine. An N-linked (GlcNAc...) asparagine glycan is attached at N183. Residues 190-302 form the CUB 2 domain; the sequence is CSGNLFTQRT…RGWRLSYRAA (113 aa). 4 residues coordinate Ca(2+): E240, D250, D287, and S289. A disulfide bridge connects residues C247 and C265. 2 consecutive Sushi domains span residues 304–369 and 370–439; these read NECP…TCKI and VDCG…TCLP. Disulfide bonds link C306–C354, C334–C367, C372–C419, C402–C437, C441–C577, and C480–C496. Residues N390 and N412 are each glycosylated (N-linked (GlcNAc...) asparagine). The 248-residue stretch at 454-701 folds into the Peptidase S1 domain; it reads IFNGRPAQKG…NKDWIQRVTG (248 aa). H495 serves as the catalytic Charge relay system. N-linked (GlcNAc...) asparagine glycosylation occurs at L538. The active-site Charge relay system is the D557. N-linked (GlcNAc...) asparagine glycosylation occurs at E604. 2 cysteine pairs are disulfide-bonded: C619–C636 and C647–C677. S651 functions as the Charge relay system in the catalytic mechanism.

This sequence belongs to the peptidase S1 family. Homodimer. Interacts with the oligomeric lectins MBL2, FCN2 and FCN3; triggers the lectin pathway of complement through activation of C3. Interacts with SERPING1. Interacts with COLEC11; probably triggers the lectin pathway of complement. Post-translationally, the iron and 2-oxoglutarate dependent 3-hydroxylation of aspartate and asparagine is (R) stereospecific within EGF domains. N-glycosylated. Some N-linked glycan are of the complex-type. In terms of processing, autoproteolytic processing of the proenzyme produces the active enzyme composed on the heavy and the light chain held together by a disulfide bond. Isoform 1 but not isoform 2 is activated through autoproteolytic processing. As to expression, protein of the plasma which is primarily expressed by liver.

It localises to the secreted. Inhibited by SERPING1 and A2M. Functionally, functions in the lectin pathway of complement, which performs a key role in innate immunity by recognizing pathogens through patterns of sugar moieties and neutralizing them. The lectin pathway is triggered upon binding of mannan-binding lectin (MBL) and ficolins to sugar moieties which leads to activation of the associated proteases MASP1 and MASP2. Functions as an endopeptidase and may activate MASP2 or C2 or directly activate C3 the key component of complement reaction. Isoform 2 may have an inhibitory effect on the activation of the lectin pathway of complement or may cleave IGFBP5. Also plays a role in development. This Rattus norvegicus (Rat) protein is Mannan-binding lectin serine protease 1 (Masp1).